The chain runs to 879 residues: Valine--tRNA ligase (879 aa).

The short motif at 45–55 (PNVTGKLHLGH) is the 'HIGH' region element. A 'KMSKS' region motif is present at residues 521–525 (KMSKS). K524 is an ATP binding site. A coiled-coil region spans residues 806–879 (LTELVNVDEE…ERMKELKESK (74 aa)).

This sequence belongs to the class-I aminoacyl-tRNA synthetase family. ValS type 1 subfamily. Monomer.

It localises to the cytoplasm. It catalyses the reaction tRNA(Val) + L-valine + ATP = L-valyl-tRNA(Val) + AMP + diphosphate. Catalyzes the attachment of valine to tRNA(Val). As ValRS can inadvertently accommodate and process structurally similar amino acids such as threonine, to avoid such errors, it has a 'posttransfer' editing activity that hydrolyzes mischarged Thr-tRNA(Val) in a tRNA-dependent manner. The protein is Valine--tRNA ligase of Lactobacillus johnsonii (strain CNCM I-12250 / La1 / NCC 533).